The chain runs to 312 residues: Tyrosine recombinase XerC (312 aa).

The 103-residue stretch at 1–103 (MIASIYSFLD…SIKSFAHYCV (103 aa)) folds into the Core-binding (CB) domain. Residues 124 to 306 (ELPSPMTYAQ…SVKLKKQTHQ (183 aa)) enclose the Tyr recombinase domain. Catalysis depends on residues R164, K188, H258, R261, and H284. Y293 acts as the O-(3'-phospho-DNA)-tyrosine intermediate in catalysis.

This sequence belongs to the 'phage' integrase family. XerC subfamily. In terms of assembly, forms a cyclic heterotetrameric complex composed of two molecules of XerC and two molecules of XerD.

The protein resides in the cytoplasm. Functionally, site-specific tyrosine recombinase, which acts by catalyzing the cutting and rejoining of the recombining DNA molecules. The XerC-XerD complex is essential to convert dimers of the bacterial chromosome into monomers to permit their segregation at cell division. It also contributes to the segregational stability of plasmids. This is Tyrosine recombinase XerC from Chlamydia pneumoniae (Chlamydophila pneumoniae).